Here is a 538-residue protein sequence, read N- to C-terminus: Aldehyde dehydrogenase family 2 member B4, mitochondrial (538 aa).

A mitochondrion-targeting transit peptide spans 1–38 (MAARRVSSLLSRSFSASSPLLFRSQGRNCYNGGILRRF). An NAD(+)-binding site is contributed by 282–287 (GSTDTG). The active-site Proton acceptor is glutamate 305. Cysteine 339 functions as the Nucleophile in the catalytic mechanism.

It belongs to the aldehyde dehydrogenase family. As to quaternary structure, homotetramer.

The protein resides in the mitochondrion matrix. It carries out the reaction an aldehyde + NAD(+) + H2O = a carboxylate + NADH + 2 H(+). Functionally, possesses activity on acetaldehyde and glycolaldehyde in vitro. This Arabidopsis thaliana (Mouse-ear cress) protein is Aldehyde dehydrogenase family 2 member B4, mitochondrial (ALDH2B4).